The primary structure comprises 758 residues: Dolichyl-phosphooligosaccharide-protein glycotransferase 2 (758 aa).

The Cytoplasmic segment spans residues 1-6 (MKRRYS). The helical transmembrane segment at 7–27 (ILIILLVAIFYRMITFRFKYL) threads the bilayer. The Extracellular segment spans residues 28 to 92 (LGYDPYFHLA…KVFGVSLTTT (65 aa)). Positions 29–31 (GYD) match the DXD motif 1 motif. Aspartate 31 is a Mn(2+) binding site. The chain crosses the membrane as a helical span at residues 93–113 (FKITPVIFGVLTVIFLYLSLL). Residues 114-120 (KLYDEKR) lie on the Cytoplasmic side of the membrane. A helical transmembrane segment spans residues 121-141 (AFFGGFFLAISYGHVFRSMAN). Residues 142–145 (YYRG) are Extracellular-facing. Mn(2+) is bound by residues arginine 144 and aspartate 146. The short motif at 144–146 (RGD) is the DXD motif 2 element. Residues 146–166 (DNYMLFWYSVALLGISLALGI) traverse the membrane as a helical segment. Topologically, residues 167–175 (KKGKWKYKR) are cytoplasmic. 2 helical membrane passes run 176–196 (LIFYTLPVLASGFSAIFWQAY) and 197–217 (YPIFAFLLSNALLLAVGAFIL). Over 218 to 226 (KKDKYLLDS) the chain is Cytoplasmic. A helical transmembrane segment spans residues 227-247 (IILILSTAFGVLLANYLGGIF). Over 248-281 (GYGMLGYAKWLGKSVAKKLGLEFGYLKDVYLILH) the chain is Extracellular. Residues 282 to 302 (LKYLVPISLSFVLVLILLGFL) form a helical membrane-spanning segment. The Cytoplasmic portion of the chain corresponds to 303 to 310 (TKDIRIRS). A helical transmembrane segment spans residues 311-331 (LFLGIASFIGIIILFKRFEAL). Topologically, residues 332-352 (KELSTGFGIFKEAPILETQPT) are extracellular. Residues 340 to 343 (IFKE) carry the TIXE motif motif. A helical membrane pass occupies residues 353 to 373 (SFKDLWAAFSLSFFLTPLFFI). The Cytoplasmic portion of the chain corresponds to 374–379 (RFKKPR). The helical transmembrane segment at 380–400 (VEDFLTLGLIIPSVYMLKTWT) threads the bilayer. Arginine 401 is a topological domain (extracellular). Arginine 401 provides a ligand contact to a glycophospholipid. Residues 402–422 (FLFIGSMAIAIMSGIGIVELY) form a helical membrane-spanning segment. Residues 423–433 (EAIKPRLNGKK) lie on the Cytoplasmic side of the membrane. The helical transmembrane segment at 434–454 (ALATGIITLVILPGVIAGLSF) threads the bilayer. Over 455 to 758 (KEVCSLHPEM…DRGVFRLSYN (304 aa)) the chain is Extracellular. Positions 488–490 (WWD) are interacts with target acceptor peptide in protein substrate. The WWDYG motif signature appears at 488–492 (WWDWG). The DK motif motif lies at 540-547 (DFLKFGAI).

The protein belongs to the STT3 family. Mn(2+) serves as cofactor. It depends on Mg(2+) as a cofactor.

Its subcellular location is the cell membrane. The enzyme catalyses an archaeal dolichyl phosphooligosaccharide + [protein]-L-asparagine = an archaeal dolichyl phosphate + a glycoprotein with the oligosaccharide chain attached by N-beta-D-glycosyl linkage to a protein L-asparagine.. The protein operates within protein modification; protein glycosylation. Its function is as follows. Oligosaccharyl transferase (OST) that catalyzes the initial transfer of a defined glycan (ManNAcXyl(2)GlcAMan(2)GalNAc in Pyrococcus) from the lipid carrier dolichol-monophosphate to an asparagine residue within an Asn-X-Ser/Thr consensus motif in nascent polypeptide chains, the first step in protein N-glycosylation. In Pyrococcus horikoshii (strain ATCC 700860 / DSM 12428 / JCM 9974 / NBRC 100139 / OT-3), this protein is Dolichyl-phosphooligosaccharide-protein glycotransferase 2 (aglB2).